Consider the following 106-residue polypeptide: Large ribosomal subunit protein eL42 (106 aa).

Belongs to the eukaryotic ribosomal protein eL42 family.

The chain is Large ribosomal subunit protein eL42 (RPL44) from Eremothecium gossypii (strain ATCC 10895 / CBS 109.51 / FGSC 9923 / NRRL Y-1056) (Yeast).